The sequence spans 31 residues: Chassatide C6 (31 aa).

The segment at residues 1–31 (GVIPCGESCVFIPCISSVIGCSCKNKVCYRN) is a cross-link (cyclopeptide (Gly-Asn)). 3 disulfides stabilise this stretch: Cys-5-Cys-21, Cys-9-Cys-23, and Cys-14-Cys-28.

This is a cyclic peptide. Expressed in fruit, pedicel, root and stem but not in leaf (at protein level).

Probably participates in a plant defense mechanism. The polypeptide is Chassatide C6 (Chassalia chartacea (Chassalia curviflora)).